Reading from the N-terminus, the 495-residue chain is MRNPTLLQCFHWYYPEGGKLWPELAERADGFNDIGINMVWLPPAYKGASGGYSVGYDSYDLFDLGEFDQKGSIPTKYGDKAQLLAAIDALKRNDIAVLLDVVVNHKMGADEKEAIRVQRVNADDRTQIDEEIIECEGWTRYTFPARAGQYSQFIWDFKCFSGIDHIENPDEDGIFKIVNDYTGEGWNDQVDDELGNFDYLMGENIDFRNHAVTEEIKYWARWVMEQTQCDGFRLDAVKHIPAWFYKEWIEHVQEVAPKPLFIVAEYWSHEVDKLQTYIDQVEGKTMLFDAPLQMKFHEASRMGRDYDMTQIFTGTLVEADPFHAVTLVANHDTQPLQALEAPVEPWFKPLAYALILLRENGVPSVFYPDLYGAHYEDVGGDGQTYPIDMPIIEQLDELILARQRFAHGVQTLFFDHPNCIAFSRSGTDEFPGCVVVMSNGDDGEKTIHLGENYGNKTWRDFLGNRQERVVTDENGEATFFCNGGSVSVWVIEEVI.

The Ca(2+) site is built by N104 and D198. The Nucleophile role is filled by D235. A Ca(2+)-binding site is contributed by H239. E265 serves as the catalytic Proton donor.

It belongs to the glycosyl hydrolase 13 family. In terms of assembly, monomer. Ca(2+) is required as a cofactor.

Its subcellular location is the cytoplasm. The enzyme catalyses Endohydrolysis of (1-&gt;4)-alpha-D-glucosidic linkages in polysaccharides containing three or more (1-&gt;4)-alpha-linked D-glucose units.. This Escherichia coli (strain K12) protein is Cytoplasmic alpha-amylase (amyA).